Consider the following 389-residue polypeptide: Terminal nucleotidyltransferase 5D (389 aa).

The protein belongs to the TENT family. As to expression, restricted to testis.

It carries out the reaction RNA(n) + ATP = RNA(n)-3'-adenine ribonucleotide + diphosphate. Catalyzes the transfer of one adenosine molecule from an ATP to an mRNA poly(A) tail bearing a 3'-OH terminal group. The protein is Terminal nucleotidyltransferase 5D of Homo sapiens (Human).